Here is a 244-residue protein sequence, read N- to C-terminus: Glucosamine-6-phosphate deaminase (244 aa).

Residue Asp-67 is the Proton acceptor; for enolization step of the active site. The active-site For ring-opening step is Asn-136. His-138 serves as the catalytic Proton acceptor; for ring-opening step. The active-site For ring-opening step is the Glu-143.

Belongs to the glucosamine/galactosamine-6-phosphate isomerase family. NagB subfamily.

The catalysed reaction is alpha-D-glucosamine 6-phosphate + H2O = beta-D-fructose 6-phosphate + NH4(+). It functions in the pathway amino-sugar metabolism; N-acetylneuraminate degradation; D-fructose 6-phosphate from N-acetylneuraminate: step 5/5. Functionally, catalyzes the reversible isomerization-deamination of glucosamine 6-phosphate (GlcN6P) to form fructose 6-phosphate (Fru6P) and ammonium ion. The sequence is that of Glucosamine-6-phosphate deaminase from Clostridium botulinum (strain 657 / Type Ba4).